The following is a 154-amino-acid chain: MEVGMIPRVYLGHEWFGAERILSEYQVPEDCGAQVLFLGIPRNAPEDGGNIEALEYEAYPEMAIKEMEKIRQETIEKFGVKEVFIHHRLGLVKIGEPSFLVLAVGGHREETFKACRYAVDETKKRVPIWKKEIFKEGKGEWVLGEKKNASGQTK.

Residues 40–42 (IPR), 107–108 (HR), Lys-123, and 130–132 (KKE) each bind substrate.

This sequence belongs to the MoaE family. As to quaternary structure, heterotetramer of 2 MoaD subunits and 2 MoaE subunits. Also stable as homodimer. The enzyme changes between these two forms during catalysis.

It carries out the reaction 2 [molybdopterin-synthase sulfur-carrier protein]-C-terminal-Gly-aminoethanethioate + cyclic pyranopterin phosphate + H2O = molybdopterin + 2 [molybdopterin-synthase sulfur-carrier protein]-C-terminal Gly-Gly + 2 H(+). Its pathway is cofactor biosynthesis; molybdopterin biosynthesis. Functionally, converts molybdopterin precursor Z into molybdopterin. This requires the incorporation of two sulfur atoms into precursor Z to generate a dithiolene group. The sulfur is provided by MoaD. This chain is Molybdopterin synthase catalytic subunit (moaE), found in Aquifex aeolicus (strain VF5).